A 60-amino-acid polypeptide reads, in one-letter code: Metallothionein (60 aa).

The segment at 1–28 is beta; sequence MDPCECSKGGTCNCGGSCTCTNCSCTTC. 20 residues coordinate a divalent metal cation: C4, C6, C12, C14, C18, C20, C23, C25, C28, C32, C33, C35, C36, C40, C43, C47, C49, C54, C58, and C59. The alpha stretch occupies residues 29-60; it reads KKSCCPCCPSGCPKCASGCVCKGKTCDAACCQ.

The protein belongs to the metallothionein superfamily. Type 1 family.

Functionally, metallothioneins have a high content of cysteine residues that bind various heavy metals. The chain is Metallothionein (mt) from Perca fluviatilis (European perch).